A 226-amino-acid polypeptide reads, in one-letter code: Triosephosphate isomerase (226 aa).

Residue 12–14 (NFK) coordinates substrate. Residue His-96 is the Electrophile of the active site. The Proton acceptor role is filled by Glu-144. Residues Ile-149, Gly-184, and 205–206 (AS) contribute to the substrate site.

It belongs to the triosephosphate isomerase family. Homotetramer; dimer of dimers.

It is found in the cytoplasm. The catalysed reaction is D-glyceraldehyde 3-phosphate = dihydroxyacetone phosphate. It functions in the pathway carbohydrate biosynthesis; gluconeogenesis. Its pathway is carbohydrate degradation; glycolysis; D-glyceraldehyde 3-phosphate from glycerone phosphate: step 1/1. Its function is as follows. Involved in the gluconeogenesis. Catalyzes stereospecifically the conversion of dihydroxyacetone phosphate (DHAP) to D-glyceraldehyde-3-phosphate (G3P). This is Triosephosphate isomerase from Thermococcus kodakarensis (strain ATCC BAA-918 / JCM 12380 / KOD1) (Pyrococcus kodakaraensis (strain KOD1)).